The primary structure comprises 343 residues: L-idonate 5-dehydrogenase (NAD(P)(+)) (343 aa).

Zn(2+) contacts are provided by C40, H65, C93, C96, C99, C107, and E153.

The protein belongs to the zinc-containing alcohol dehydrogenase family. It depends on Zn(2+) as a cofactor.

The enzyme catalyses L-idonate + NADP(+) = 5-dehydro-D-gluconate + NADPH + H(+). The catalysed reaction is L-idonate + NAD(+) = 5-dehydro-D-gluconate + NADH + H(+). Its pathway is carbohydrate acid metabolism; L-idonate degradation. In terms of biological role, catalyzes the NADH/NADPH-dependent oxidation of L-idonate to 5-ketogluconate (5KG). The polypeptide is L-idonate 5-dehydrogenase (NAD(P)(+)) (idnD) (Escherichia coli (strain K12)).